The following is a 346-amino-acid chain: Glycerol-1-phosphate dehydrogenase [NAD(P)+] (346 aa).

Residues 93 to 97 and 115 to 118 contribute to the NAD(+) site; these read GSIID and TTAS. Substrate is bound at residue D120. S124 is a binding site for NAD(+). D167 serves as a coordination point for substrate. Residues D167 and H247 each coordinate Zn(2+). H251 is a binding site for substrate. Position 263 (H263) interacts with Zn(2+).

This sequence belongs to the glycerol-1-phosphate dehydrogenase family. Zn(2+) is required as a cofactor.

Its subcellular location is the cytoplasm. The enzyme catalyses sn-glycerol 1-phosphate + NAD(+) = dihydroxyacetone phosphate + NADH + H(+). The catalysed reaction is sn-glycerol 1-phosphate + NADP(+) = dihydroxyacetone phosphate + NADPH + H(+). Its pathway is membrane lipid metabolism; glycerophospholipid metabolism. In terms of biological role, catalyzes the NAD(P)H-dependent reduction of dihydroxyacetonephosphate (DHAP or glycerone phosphate) to glycerol 1-phosphate (G1P). The G1P thus generated is used as the glycerophosphate backbone of phospholipids in the cellular membranes of Archaea. In Pyrococcus horikoshii (strain ATCC 700860 / DSM 12428 / JCM 9974 / NBRC 100139 / OT-3), this protein is Glycerol-1-phosphate dehydrogenase [NAD(P)+].